A 537-amino-acid polypeptide reads, in one-letter code: MALVKTETQALGNHQHSSRFGSLYVGDLSPDVTEKDLIDKFSLNVPVVSVHLCRNSVTGKSMCYAYINFDSPFSASNAMTRLNHSDLKGKAMRIMWSQRDLAYRRRTRTGFANLYVKNLDSSITSSCLERMFCPFGSILSCKVVEENGQSKGFGFVQFDTEQSAVSARSALHGSMVYGKKLFVAKFINKDERAAMAGNQDSTNVYVKNLIETVTDDCLHTLFSQYGTVSSVVVMRDGMGRSRGFGFVNFCNPENAKKAMESLCGLQLGSKKLFVGKALKKDERREMLKQKFSDNFIAKPNMRWSNLYVKNLSESMNETRLREIFGCYGQIVSAKVMCHENGRSKGFGFVCFSNCEESKQAKRYLNGFLVDGKPIVVRVAERKEDRIKRLQQYFQAQPRQYTQAPSAPSPAQPVLSYVSSSYGCFQPFQVGTSYYYMGNQVPQMSGHQNITTYVPAGKVPLKERRSMHLVYKHPAYPVAKRGAKQTLVFKGEVNRNLEAATCSKATTSEENRKEERRLTLSGKLSPEVKVEESGKQLQ.

RRM domains are found at residues 21-99 (GSLY…WSQR), 112-188 (ANLY…KFIN), 202-279 (TNVY…KALK), and 304-381 (SNLY…VAER). Positions 503-537 (KATTSEENRKEERRLTLSGKLSPEVKVEESGKQLQ) are disordered. 2 stretches are compositionally biased toward basic and acidic residues: residues 506-517 (TSEENRKEERRL) and 525-537 (PEVK…KQLQ).

This sequence belongs to the polyadenylate-binding protein type-1 family. Expressed at low levels in leaves and young seedlings.

The protein resides in the cytoplasm. It localises to the nucleus. Functionally, binds the poly(A) tail of mRNA. Appears to be an important mediator of the multiple roles of the poly(A) tail in mRNA biogenesis, stability and translation. The chain is Polyadenylate-binding protein 6 (PAB6) from Arabidopsis thaliana (Mouse-ear cress).